The following is a 473-amino-acid chain: Cysteine--tRNA ligase (473 aa).

Cys-28 lines the Zn(2+) pocket. Positions 30–40 match the 'HIGH' region motif; it reads PTVYNMPHIGN. 3 residues coordinate Zn(2+): Cys-213, His-238, and Glu-242. Positions 270-274 match the 'KMSKS' region motif; the sequence is KMSKS. Lys-273 is a binding site for ATP.

It belongs to the class-I aminoacyl-tRNA synthetase family. The cofactor is Zn(2+).

The protein localises to the cytoplasm. It catalyses the reaction tRNA(Cys) + L-cysteine + ATP = L-cysteinyl-tRNA(Cys) + AMP + diphosphate. The polypeptide is Cysteine--tRNA ligase (Methanosarcina acetivorans (strain ATCC 35395 / DSM 2834 / JCM 12185 / C2A)).